We begin with the raw amino-acid sequence, 292 residues long: Pyridoxal 5'-phosphate synthase subunit PdxS (292 aa).

Aspartate 22 provides a ligand contact to D-ribose 5-phosphate. Catalysis depends on lysine 79, which acts as the Schiff-base intermediate with D-ribose 5-phosphate. Glycine 151 is a binding site for D-ribose 5-phosphate. Arginine 163 lines the D-glyceraldehyde 3-phosphate pocket. Residues glycine 212 and 233–234 (GS) each bind D-ribose 5-phosphate.

Belongs to the PdxS/SNZ family. In the presence of PdxT, forms a dodecamer of heterodimers.

The enzyme catalyses aldehydo-D-ribose 5-phosphate + D-glyceraldehyde 3-phosphate + L-glutamine = pyridoxal 5'-phosphate + L-glutamate + phosphate + 3 H2O + H(+). It functions in the pathway cofactor biosynthesis; pyridoxal 5'-phosphate biosynthesis. Catalyzes the formation of pyridoxal 5'-phosphate from ribose 5-phosphate (RBP), glyceraldehyde 3-phosphate (G3P) and ammonia. The ammonia is provided by the PdxT subunit. Can also use ribulose 5-phosphate and dihydroxyacetone phosphate as substrates, resulting from enzyme-catalyzed isomerization of RBP and G3P, respectively. This chain is Pyridoxal 5'-phosphate synthase subunit PdxS, found in Thermoanaerobacter pseudethanolicus (strain ATCC 33223 / 39E) (Clostridium thermohydrosulfuricum).